Reading from the N-terminus, the 347-residue chain is Protein phosphatase 1 regulatory subunit 3G (347 aa).

Residues 1 to 77 (MDPSGEQLHR…ELQEYRRSRA (77 aa)) are disordered. Positions 13–22 (ASSSTSSGDP) are enriched in polar residues. Residue Ser-81 is modified to Phosphoserine. Residues 200–339 (EERLRRQRVC…NNEGANYTLR (140 aa)) form the CBM21 domain. The segment at 258 to 286 (DPESVEPLPPLQSGDSGSKAEDSEEGPGT) is disordered.

In terms of biological role, glycogen-targeting subunit for protein phosphatase 1 (PP1). Involved in the regulation of hepatic glycogenesis in a manner coupled to the fasting-feeding cycle and distinct from other glycogen-targeting subunits. The sequence is that of Protein phosphatase 1 regulatory subunit 3G (Ppp1r3g) from Mus musculus (Mouse).